A 182-amino-acid chain; its full sequence is MVKALLVGSKVLIPNVDESRYIYSNGFYGKAVGISKPKDPKDIIRPLELSLIESVYLAKKGLIKVIDKNGEVLEYEKLYEYSSKIINKFDIMYRVYEDLREKGFIVRSGVKYGADFAVYTLGPGLEHAPYVVIAVDIDEEITPHELLSFGRVSHSTRKRLVLALVDRKSESVRYIMFKWVKM.

Catalysis depends on residues Tyr119, His127, and Lys158.

It belongs to the tRNA-intron endonuclease family. Archaeal short subfamily. In terms of assembly, homotetramer; although the tetramer contains four active sites, only two participate in the cleavage. Therefore, it should be considered as a dimer of dimers.

The enzyme catalyses pretRNA = a 3'-half-tRNA molecule with a 5'-OH end + a 5'-half-tRNA molecule with a 2',3'-cyclic phosphate end + an intron with a 2',3'-cyclic phosphate and a 5'-hydroxyl terminus.. In terms of biological role, endonuclease that removes tRNA introns. Cleaves pre-tRNA at the 5'- and 3'-splice sites to release the intron. The products are an intron and two tRNA half-molecules bearing 2',3' cyclic phosphate and 5'-OH termini. Recognizes a pseudosymmetric substrate in which 2 bulged loops of 3 bases are separated by a stem of 4 bp. This chain is tRNA-splicing endonuclease, found in Saccharolobus islandicus (strain Y.N.15.51 / Yellowstone #2) (Sulfolobus islandicus).